The primary structure comprises 158 residues: Small ribosomal subunit protein uS9 (158 aa).

The disordered stretch occupies residues 1–20; that stretch reads MTEAVETETVEPTTDEATAA. Positions 10-20 are enriched in low complexity; it reads VEPTTDEATAA.

Belongs to the universal ribosomal protein uS9 family.

The protein is Small ribosomal subunit protein uS9 of Mycobacterium sp. (strain JLS).